The sequence spans 228 residues: UPF0173 metal-dependent hydrolase lwe1590 (228 aa).

The protein belongs to the UPF0173 family.

The polypeptide is UPF0173 metal-dependent hydrolase lwe1590 (Listeria welshimeri serovar 6b (strain ATCC 35897 / DSM 20650 / CCUG 15529 / CIP 8149 / NCTC 11857 / SLCC 5334 / V8)).